The chain runs to 312 residues: Polyamine aminopropyltransferase (312 aa).

The PABS domain occupies 7-247 (FFWVQEYFTP…GPLGFALAAQ (241 aa)). Residue glutamine 36 coordinates S-methyl-5'-thioadenosine. Spermidine is bound by residues histidine 67 and glutamate 95. Residues aspartate 115 and 147 to 148 (DA) each bind S-methyl-5'-thioadenosine. Aspartate 165 serves as the catalytic Proton acceptor. Position 174 (proline 174) interacts with S-methyl-5'-thioadenosine.

This sequence belongs to the spermidine/spermine synthase family. Homodimer or homotetramer.

It is found in the cytoplasm. The enzyme catalyses S-adenosyl 3-(methylsulfanyl)propylamine + putrescine = S-methyl-5'-thioadenosine + spermidine + H(+). It functions in the pathway amine and polyamine biosynthesis; spermidine biosynthesis; spermidine from putrescine: step 1/1. In terms of biological role, catalyzes the irreversible transfer of a propylamine group from the amino donor S-adenosylmethioninamine (decarboxy-AdoMet) to putrescine (1,4-diaminobutane) to yield spermidine. This is Polyamine aminopropyltransferase from Synechococcus sp. (strain JA-2-3B'a(2-13)) (Cyanobacteria bacterium Yellowstone B-Prime).